A 441-amino-acid chain; its full sequence is tRNA modification GTPase MnmE (441 aa).

Residues Arg-21, Glu-78, and Lys-117 each coordinate (6S)-5-formyl-5,6,7,8-tetrahydrofolate. A TrmE-type G domain is found at Gly-211–Lys-363. K(+) is bound at residue Asn-221. GTP is bound by residues Asn-221 to Thr-226, Thr-240 to Thr-246, and Asp-265 to Gly-268. A Mg(2+)-binding site is contributed by Ser-225. 3 residues coordinate K(+): Thr-240, Ile-242, and Thr-245. Residue Thr-246 participates in Mg(2+) binding. A (6S)-5-formyl-5,6,7,8-tetrahydrofolate-binding site is contributed by Lys-441.

Belongs to the TRAFAC class TrmE-Era-EngA-EngB-Septin-like GTPase superfamily. TrmE GTPase family. As to quaternary structure, homodimer. Heterotetramer of two MnmE and two MnmG subunits. It depends on K(+) as a cofactor.

It localises to the cytoplasm. Exhibits a very high intrinsic GTPase hydrolysis rate. Involved in the addition of a carboxymethylaminomethyl (cmnm) group at the wobble position (U34) of certain tRNAs, forming tRNA-cmnm(5)s(2)U34. The protein is tRNA modification GTPase MnmE of Thermosipho melanesiensis (strain DSM 12029 / CIP 104789 / BI429).